The sequence spans 462 residues: GTPase Der (462 aa).

EngA-type G domains lie at Lys2–Glu164 and Ile195–Ser366. GTP is bound by residues Gly8–Ser15, Asp55–Ile59, Asn116–Asp119, Gly201–Ser208, Asp248–Ile252, and Asn312–Asp315. The KH-like domain occupies Thr367–Gly451.

Belongs to the TRAFAC class TrmE-Era-EngA-EngB-Septin-like GTPase superfamily. EngA (Der) GTPase family. In terms of assembly, associates with the 50S ribosomal subunit.

Its function is as follows. GTPase that plays an essential role in the late steps of ribosome biogenesis. This is GTPase Der from Nitratiruptor sp. (strain SB155-2).